The sequence spans 65 residues: Large ribosomal subunit protein bL35 (65 aa).

The protein belongs to the bacterial ribosomal protein bL35 family.

The chain is Large ribosomal subunit protein bL35 from Thermotoga maritima (strain ATCC 43589 / DSM 3109 / JCM 10099 / NBRC 100826 / MSB8).